We begin with the raw amino-acid sequence, 239 residues long: Ribosomal RNA large subunit methyltransferase E (239 aa).

Residues 1-20 (MTKAPIAGNRTGRKLGQRVK) are disordered. Positions 11–20 (TGRKLGQRVK) are enriched in basic residues. 5 residues coordinate S-adenosyl-L-methionine: Gly81, Trp83, Asp104, Asp120, and Asp144. Lys184 (proton acceptor) is an active-site residue.

It belongs to the class I-like SAM-binding methyltransferase superfamily. RNA methyltransferase RlmE family.

Its subcellular location is the cytoplasm. It carries out the reaction uridine(2552) in 23S rRNA + S-adenosyl-L-methionine = 2'-O-methyluridine(2552) in 23S rRNA + S-adenosyl-L-homocysteine + H(+). Specifically methylates the uridine in position 2552 of 23S rRNA at the 2'-O position of the ribose in the fully assembled 50S ribosomal subunit. In Rhizobium etli (strain ATCC 51251 / DSM 11541 / JCM 21823 / NBRC 15573 / CFN 42), this protein is Ribosomal RNA large subunit methyltransferase E.